Reading from the N-terminus, the 93-residue chain is Putative pterin-4-alpha-carbinolamine dehydratase (93 aa).

It belongs to the pterin-4-alpha-carbinolamine dehydratase family.

The catalysed reaction is (4aS,6R)-4a-hydroxy-L-erythro-5,6,7,8-tetrahydrobiopterin = (6R)-L-erythro-6,7-dihydrobiopterin + H2O. The polypeptide is Putative pterin-4-alpha-carbinolamine dehydratase (Trichodesmium erythraeum (strain IMS101)).